Here is a 113-residue protein sequence, read N- to C-terminus: Major basic nuclear protein 1 (113 aa).

Positions 1–20 (MAPKMKAAMKAMKAPAMKGK) are disordered.

The protein localises to the nucleus. This Crypthecodinium cohnii (Dinoflagellate) protein is Major basic nuclear protein 1 (HCc1).